Consider the following 476-residue polypeptide: Aspartyl/glutamyl-tRNA(Asn/Gln) amidotransferase subunit B (476 aa).

Belongs to the GatB/GatE family. GatB subfamily. Heterotrimer of A, B and C subunits.

It carries out the reaction L-glutamyl-tRNA(Gln) + L-glutamine + ATP + H2O = L-glutaminyl-tRNA(Gln) + L-glutamate + ADP + phosphate + H(+). The catalysed reaction is L-aspartyl-tRNA(Asn) + L-glutamine + ATP + H2O = L-asparaginyl-tRNA(Asn) + L-glutamate + ADP + phosphate + 2 H(+). Functionally, allows the formation of correctly charged Asn-tRNA(Asn) or Gln-tRNA(Gln) through the transamidation of misacylated Asp-tRNA(Asn) or Glu-tRNA(Gln) in organisms which lack either or both of asparaginyl-tRNA or glutaminyl-tRNA synthetases. The reaction takes place in the presence of glutamine and ATP through an activated phospho-Asp-tRNA(Asn) or phospho-Glu-tRNA(Gln). In Neisseria meningitidis serogroup A / serotype 4A (strain DSM 15465 / Z2491), this protein is Aspartyl/glutamyl-tRNA(Asn/Gln) amidotransferase subunit B.